We begin with the raw amino-acid sequence, 309 residues long: MPLQLFGRDQIVVHYDNGNMSNDDQNHQSVLGSWTRRAAAALRTLMNKRIQRITLTHWLLLVIWVTSLWKFTSHYRQLYANSAVFATLCTNILLFGISDILAQSIACFYSYHVDPIPQILNDTFHHVQNNRDVENGGGYESDELSIFNDFTSEHSSYTDNDDYPELDRPLATFKTDTFDFFRWGCFMFWGFFISFFQAPWYKFLNFFYTEDPTVVQVFERVLSDQLLYSPISLYCFFMFSNYVMEGGDKDTLGKKIQRLYISTLGCNYLVWPMVQFINFLIMPRDFQAPFSSSVGVVWNCFLSMRNASK.

Topologically, residues 1-52 (MPLQLFGRDQIVVHYDNGNMSNDDQNHQSVLGSWTRRAAAALRTLMNKRIQR) are vacuolar. An N-linked (GlcNAc...) asparagine glycan is attached at Asn-19. Residues 53 to 73 (ITLTHWLLLVIWVTSLWKFTS) traverse the membrane as a helical segment. At 74–81 (HYRQLYAN) the chain is on the cytoplasmic side. The helical transmembrane segment at 82–102 (SAVFATLCTNILLFGISDILA) threads the bilayer. The Vacuolar portion of the chain corresponds to 103-183 (QSIACFYSYH…KTDTFDFFRW (81 aa)). Asn-121 is a glycosylation site (N-linked (GlcNAc...) asparagine). A helical membrane pass occupies residues 184-204 (GCFMFWGFFISFFQAPWYKFL). Over 205–225 (NFFYTEDPTVVQVFERVLSDQ) the chain is Cytoplasmic. Residues 226–246 (LLYSPISLYCFFMFSNYVMEG) form a helical membrane-spanning segment. The Vacuolar portion of the chain corresponds to 247 to 260 (GDKDTLGKKIQRLY). A helical transmembrane segment spans residues 261 to 281 (ISTLGCNYLVWPMVQFINFLI). Residues 282 to 309 (MPRDFQAPFSSSVGVVWNCFLSMRNASK) lie on the Cytoplasmic side of the membrane.

The protein belongs to the peroxisomal membrane protein PXMP2/4 family. In terms of processing, N-glycosylated.

It is found in the vacuole membrane. This chain is Vacuolar membrane protein YOR292C, found in Saccharomyces cerevisiae (strain ATCC 204508 / S288c) (Baker's yeast).